We begin with the raw amino-acid sequence, 260 residues long: Flavin-dependent thymidylate synthase (260 aa).

The 202-residue stretch at 1–202 (MKIKLVSYSK…PRLFKYAGPN (202 aa)) folds into the ThyX domain. Residues serine 55, 79–81 (RHR), and glutamine 87 contribute to the FAD site. DUMP-binding positions include 76 to 79 (QLVR), 87 to 91 (QMSHR), and arginine 141. The short motif at 79 to 89 (RHRIASYTQMS) is the ThyX motif element. FAD contacts are provided by residues 157–159 (NAR) and asparagine 163. A dUMP-binding site is contributed by arginine 168. Arginine 168 acts as the Involved in ionization of N3 of dUMP, leading to its activation in catalysis.

The protein belongs to the thymidylate synthase ThyX family. In terms of assembly, homotetramer. It depends on FAD as a cofactor.

The enzyme catalyses dUMP + (6R)-5,10-methylene-5,6,7,8-tetrahydrofolate + NADPH + H(+) = dTMP + (6S)-5,6,7,8-tetrahydrofolate + NADP(+). It functions in the pathway pyrimidine metabolism; dTTP biosynthesis. Functionally, catalyzes the reductive methylation of 2'-deoxyuridine-5'-monophosphate (dUMP) to 2'-deoxythymidine-5'-monophosphate (dTMP) while utilizing 5,10-methylenetetrahydrofolate (mTHF) as the methyl donor, and NADPH and FADH(2) as the reductant. The protein is Flavin-dependent thymidylate synthase of Sulfolobus acidocaldarius (strain ATCC 33909 / DSM 639 / JCM 8929 / NBRC 15157 / NCIMB 11770).